Reading from the N-terminus, the 273-residue chain is Imidazole glycerol phosphate synthase subunit HisF (273 aa).

Active-site residues include D11 and D134.

Belongs to the HisA/HisF family. Heterodimer of HisH and HisF.

It localises to the cytoplasm. The catalysed reaction is 5-[(5-phospho-1-deoxy-D-ribulos-1-ylimino)methylamino]-1-(5-phospho-beta-D-ribosyl)imidazole-4-carboxamide + L-glutamine = D-erythro-1-(imidazol-4-yl)glycerol 3-phosphate + 5-amino-1-(5-phospho-beta-D-ribosyl)imidazole-4-carboxamide + L-glutamate + H(+). It functions in the pathway amino-acid biosynthesis; L-histidine biosynthesis; L-histidine from 5-phospho-alpha-D-ribose 1-diphosphate: step 5/9. Functionally, IGPS catalyzes the conversion of PRFAR and glutamine to IGP, AICAR and glutamate. The HisF subunit catalyzes the cyclization activity that produces IGP and AICAR from PRFAR using the ammonia provided by the HisH subunit. This chain is Imidazole glycerol phosphate synthase subunit HisF, found in Methanocella arvoryzae (strain DSM 22066 / NBRC 105507 / MRE50).